Reading from the N-terminus, the 284-residue chain is Acetyl-coenzyme A carboxylase carboxyl transferase subunit beta (284 aa).

Residues 27-284 (LMTKCPSCKY…ELHDGGVRHV (258 aa)) form the CoA carboxyltransferase N-terminal domain. Zn(2+) is bound by residues C31, C34, C50, and C52. The segment at 31-52 (CPSCKYMHYTKQLNENHKVCDC) adopts a C4-type zinc-finger fold.

The protein belongs to the AccD/PCCB family. Acetyl-CoA carboxylase is a heterohexamer composed of biotin carboxyl carrier protein (AccB), biotin carboxylase (AccC) and two subunits each of ACCase subunit alpha (AccA) and ACCase subunit beta (AccD). It depends on Zn(2+) as a cofactor.

The protein localises to the cytoplasm. It carries out the reaction N(6)-carboxybiotinyl-L-lysyl-[protein] + acetyl-CoA = N(6)-biotinyl-L-lysyl-[protein] + malonyl-CoA. Its pathway is lipid metabolism; malonyl-CoA biosynthesis; malonyl-CoA from acetyl-CoA: step 1/1. Component of the acetyl coenzyme A carboxylase (ACC) complex. Biotin carboxylase (BC) catalyzes the carboxylation of biotin on its carrier protein (BCCP) and then the CO(2) group is transferred by the transcarboxylase to acetyl-CoA to form malonyl-CoA. This is Acetyl-coenzyme A carboxylase carboxyl transferase subunit beta from Exiguobacterium sp. (strain ATCC BAA-1283 / AT1b).